We begin with the raw amino-acid sequence, 93 residues long: Acylphosphatase (93 aa).

Cys-5 and Cys-49 are oxidised to a cystine. The Acylphosphatase-like domain maps to 5–93; sequence CTIAWIYGRV…ETLTDFSIRY (89 aa). Active-site residues include Arg-20 and Asn-38.

The protein belongs to the acylphosphatase family.

It catalyses the reaction an acyl phosphate + H2O = a carboxylate + phosphate + H(+). The polypeptide is Acylphosphatase (Salmonella arizonae (strain ATCC BAA-731 / CDC346-86 / RSK2980)).